A 109-amino-acid polypeptide reads, in one-letter code: Large ribosomal subunit protein uL22 (109 aa).

The protein belongs to the universal ribosomal protein uL22 family. As to quaternary structure, part of the 50S ribosomal subunit.

This protein binds specifically to 23S rRNA; its binding is stimulated by other ribosomal proteins, e.g. L4, L17, and L20. It is important during the early stages of 50S assembly. It makes multiple contacts with different domains of the 23S rRNA in the assembled 50S subunit and ribosome. Functionally, the globular domain of the protein is located near the polypeptide exit tunnel on the outside of the subunit, while an extended beta-hairpin is found that lines the wall of the exit tunnel in the center of the 70S ribosome. This chain is Large ribosomal subunit protein uL22, found in Polaromonas naphthalenivorans (strain CJ2).